A 62-amino-acid polypeptide reads, in one-letter code: Large ribosomal subunit protein eL37 (62 aa).

Residues Cys-20, Cys-23, Cys-35, and Cys-38 each contribute to the Zn(2+) site. The C4-type zinc-finger motif lies at 20 to 38 (CRRCGRRAYHVRKGYCAAC).

Belongs to the eukaryotic ribosomal protein eL37 family. It depends on Zn(2+) as a cofactor.

Binds to the 23S rRNA. This chain is Large ribosomal subunit protein eL37, found in Methanopyrus kandleri (strain AV19 / DSM 6324 / JCM 9639 / NBRC 100938).